Here is a 165-residue protein sequence, read N- to C-terminus: Putative 4-hydroxy-4-methyl-2-oxoglutarate aldolase (165 aa).

Substrate is bound by residues 80–83 and R102; that span reads GGNL. Position 103 (D103) interacts with a divalent metal cation.

The protein belongs to the class II aldolase/RraA-like family. In terms of assembly, homotrimer. It depends on a divalent metal cation as a cofactor.

It carries out the reaction 4-hydroxy-4-methyl-2-oxoglutarate = 2 pyruvate. The catalysed reaction is oxaloacetate + H(+) = pyruvate + CO2. Catalyzes the aldol cleavage of 4-hydroxy-4-methyl-2-oxoglutarate (HMG) into 2 molecules of pyruvate. Also contains a secondary oxaloacetate (OAA) decarboxylase activity due to the common pyruvate enolate transition state formed following C-C bond cleavage in the retro-aldol and decarboxylation reactions. This chain is Putative 4-hydroxy-4-methyl-2-oxoglutarate aldolase, found in Cupriavidus necator (strain ATCC 17699 / DSM 428 / KCTC 22496 / NCIMB 10442 / H16 / Stanier 337) (Ralstonia eutropha).